A 412-amino-acid polypeptide reads, in one-letter code: Methylmalonic aciduria type A homolog, mitochondrial (412 aa).

Residues 1–15 constitute a mitochondrion transit peptide; sequence MVVRALVRAHPLSRI. GTP contacts are provided by residues 132–140, aspartate 275, and 311–313; these read GSPGVGKSS and SIM.

The protein belongs to the SIMIBI class G3E GTPase family. ArgK/MeaB subfamily.

The protein resides in the mitochondrion. May have GTPase activity. May also bind and hydrolyze ATP. May function as chaperone. Likely to have a role in propionyl-CoA metabolism and adenosylcobalamin synthesis. The protein is Methylmalonic aciduria type A homolog, mitochondrial of Caenorhabditis briggsae.